The sequence spans 105 residues: MFELDKDTFETEVLQGTGYVLVDFWSEGCEPCKALMPDIQEMEKTYGEQVRFTKLDTTKARRLAIKEKVLGLPTIAIYKDGQKIDELTKEDATAANVEAMVKKYI.

In terms of domain architecture, Thioredoxin spans 1–105; the sequence is MFELDKDTFE…NVEAMVKKYI (105 aa). The cysteines at positions 29 and 32 are disulfide-linked.

This sequence belongs to the thioredoxin family.

Participates in various redox reactions through the reversible oxidation of its active center dithiol to a disulfide and catalyzes dithiol-disulfide exchange reactions. This is Thioredoxin (trxA) from Acetoanaerobium sticklandii (strain ATCC 12662 / DSM 519 / JCM 1433 / CCUG 9281 / NCIMB 10654 / HF) (Clostridium sticklandii).